A 434-amino-acid chain; its full sequence is Methylenetetrahydrofolate--tRNA-(uracil-5-)-methyltransferase TrmFO (434 aa).

Residue 9–14 (GAGLAG) participates in FAD binding.

This sequence belongs to the MnmG family. TrmFO subfamily. It depends on FAD as a cofactor.

It is found in the cytoplasm. It carries out the reaction uridine(54) in tRNA + (6R)-5,10-methylene-5,6,7,8-tetrahydrofolate + NADH + H(+) = 5-methyluridine(54) in tRNA + (6S)-5,6,7,8-tetrahydrofolate + NAD(+). The catalysed reaction is uridine(54) in tRNA + (6R)-5,10-methylene-5,6,7,8-tetrahydrofolate + NADPH + H(+) = 5-methyluridine(54) in tRNA + (6S)-5,6,7,8-tetrahydrofolate + NADP(+). Catalyzes the folate-dependent formation of 5-methyl-uridine at position 54 (M-5-U54) in all tRNAs. The polypeptide is Methylenetetrahydrofolate--tRNA-(uracil-5-)-methyltransferase TrmFO (Listeria monocytogenes serotype 4b (strain F2365)).